We begin with the raw amino-acid sequence, 258 residues long: 3-deoxy-manno-octulosonate cytidylyltransferase (258 aa).

It belongs to the KdsB family.

It is found in the cytoplasm. The catalysed reaction is 3-deoxy-alpha-D-manno-oct-2-ulosonate + CTP = CMP-3-deoxy-beta-D-manno-octulosonate + diphosphate. It participates in nucleotide-sugar biosynthesis; CMP-3-deoxy-D-manno-octulosonate biosynthesis; CMP-3-deoxy-D-manno-octulosonate from 3-deoxy-D-manno-octulosonate and CTP: step 1/1. It functions in the pathway bacterial outer membrane biogenesis; lipopolysaccharide biosynthesis. In terms of biological role, activates KDO (a required 8-carbon sugar) for incorporation into bacterial lipopolysaccharide in Gram-negative bacteria. The sequence is that of 3-deoxy-manno-octulosonate cytidylyltransferase from Gemmatimonas aurantiaca (strain DSM 14586 / JCM 11422 / NBRC 100505 / T-27).